The sequence spans 524 residues: Tissue-resident T-cell transcription regulator protein ZNF683 (524 aa).

Basic and acidic residues predominate over residues Asn130–Gly142. Disordered stretches follow at residues Asn130–Ser166 and Gln265–Gln303. 2 consecutive C2H2-type zinc fingers follow at residues Tyr322 to His344 and Phe350 to His372. The C2H2-type 3; degenerate zinc-finger motif lies at Arg398 to His420. Residues Phe426–His448 form a C2H2-type 4 zinc finger.

The protein belongs to the krueppel C2H2-type zinc-finger protein family. As to expression, expressed in terminally differentiated effector CD8(+) T-cells, but not in naive and central memory cells. Expressed in terminally differentiated natural killer (NK) cells and natural killer (NKT) T-cells (at protein level). Expressed strongly in effector-type CD8(+) T-cells and weakly in naive and memory CD8(+) T-cells. Expressed in terminally differentiated natural killer (NK) cells. Isoform 2 is strongly expressed in effector CD8(+) T and natural killer (NK) cells. Isoform 1 is expressed in effector CD8(+) T and natural killer (NK) cells. (Microbial infection) Expressed in cytomegalovirus (CMV)-infected effector CD8(+) T-cells (at protein level).

The protein localises to the nucleus. In terms of biological role, transcription factor that mediates a transcriptional program in various innate and adaptive immune tissue-resident lymphocyte T-cell types such as tissue-resident memory T (Trm), natural killer (trNK) and natural killer T (NKT) cells and negatively regulates gene expression of proteins that promote the egress of tissue-resident T-cell populations from non-lymphoid organs. Plays a role in the development, retention and long-term establishment of adaptive and innate tissue-resident lymphocyte T cell types in non-lymphoid organs, such as the skin and gut, but also in other nonbarrier tissues like liver and kidney, and therefore may provide immediate immunological protection against reactivating infections or viral reinfection. Also plays a role in the differentiation of both thymic and peripheral NKT cells. Negatively regulates the accumulation of interferon-gamma (IFN-gamma) in NKT cells at steady state or after antigenic stimulation. Positively regulates granzyme B production in NKT cells after innate stimulation. Associates with the transcriptional repressor PRDM1/BLIMP1 to chromatin at gene promoter regions. Its function is as follows. Lacks transcriptional repressor activity. Binds to DNA within promoter regions of the transcriptional repressor PRDM1/BLIMP1 target sites. Unable to regulate interferon-gamma (IFN-gamma) production in cytomegalovirus (CMV)-infected effector CD8(+) T-cells. Functionally, transcriptional repressor that binds to DNA within promoter regions of the transcriptional repressor PRDM1/BLIMP1 target sites. Regulates interferon-gamma (IFN-gamma) production in cytomegalovirus (CMV)-infected effector CD8(+) T cells. This chain is Tissue-resident T-cell transcription regulator protein ZNF683, found in Homo sapiens (Human).